The chain runs to 86 residues: Progonadoliberin IIB (86 aa).

Positions 1-24 are cleaved as a signal peptide; that stretch reads MVHICRLFVVMGMLMFLSVQFASS. The residue at position 25 (Gln-25) is a Pyrrolidone carboxylic acid. Gly-34 carries the post-translational modification Glycine amide.

It belongs to the GnRH family. In terms of tissue distribution, olfactory bulbs, hypothalamus and telencephalon, midbrain and posterior brain areas.

Its subcellular location is the secreted. Functionally, stimulates the secretion of gonadotropins. In Carassius auratus (Goldfish), this protein is Progonadoliberin IIB (gnrh2b).